Here is a 201-residue protein sequence, read N- to C-terminus: Twist-related protein 1 (201 aa).

Low complexity predominate over residues 1–18 (MMQDVSSSPVSPADDSLS). The interval 1-106 (MMQDVSSSPV…GGGSPQSYEE (106 aa)) is disordered. Residues 34-43 (RGGRKRRSSR) show a composition bias toward basic residues. 2 stretches are compositionally biased toward gly residues: residues 46 to 65 (AGGG…GGDE) and 80 to 100 (GCGG…GGGS). Residues 109–160 (TQRVMANVRERQRTQSLNEAFAALPKIIPTLPSDKLSKIQTLKLAARYIDFL) form the bHLH domain. Residues 162-190 (QVLQSDELDSKMASYVAHERLSYAFSVWR) are sufficient for transactivation activity.

Efficient DNA binding requires dimerization with another bHLH protein. Homodimer or heterodimer with E proteins such as TCF3. ID1 binds preferentially to TCF3 but does not interact efficiently with TWIST1 so ID1 levels control the amount of TCF3 available to dimerize with TWIST and thus determine the type of dimer formed.

It localises to the nucleus. Acts as a transcriptional regulator. Inhibits myogenesis by sequestrating E proteins, inhibiting trans-activation by MEF2, and inhibiting DNA-binding by MYOD1 through physical interaction. This interaction probably involves the basic domains of both proteins. Also represses expression of pro-inflammatory cytokines such as TNFA and IL1B. Regulates cranial suture patterning and fusion. Activates transcription as a heterodimer with E proteins. Regulates gene expression differentially, depending on dimer composition. Homodimers induce expression of FGFR2 and POSTN while heterodimers repress FGFR2 and POSTN expression and induce THBS1 expression. Heterodimerization is also required for osteoblast differentiation. Represses the activity of the circadian transcriptional activator: NPAS2-BMAL1 heterodimer. In Pan troglodytes (Chimpanzee), this protein is Twist-related protein 1 (TWIST1).